We begin with the raw amino-acid sequence, 415 residues long: Serine hydroxymethyltransferase 2 (415 aa).

Residues leucine 121 and glycine 125–leucine 127 contribute to the (6S)-5,6,7,8-tetrahydrofolate site. N6-(pyridoxal phosphate)lysine is present on lysine 229.

It belongs to the SHMT family. Homodimer. Pyridoxal 5'-phosphate is required as a cofactor.

The protein resides in the cytoplasm. It catalyses the reaction (6R)-5,10-methylene-5,6,7,8-tetrahydrofolate + glycine + H2O = (6S)-5,6,7,8-tetrahydrofolate + L-serine. Its pathway is one-carbon metabolism; tetrahydrofolate interconversion. It functions in the pathway amino-acid biosynthesis; glycine biosynthesis; glycine from L-serine: step 1/1. In terms of biological role, catalyzes the reversible interconversion of serine and glycine with tetrahydrofolate (THF) serving as the one-carbon carrier. This reaction serves as the major source of one-carbon groups required for the biosynthesis of purines, thymidylate, methionine, and other important biomolecules. Also exhibits THF-independent aldolase activity toward beta-hydroxyamino acids, producing glycine and aldehydes, via a retro-aldol mechanism. The chain is Serine hydroxymethyltransferase 2 from Bordetella bronchiseptica (strain ATCC BAA-588 / NCTC 13252 / RB50) (Alcaligenes bronchisepticus).